We begin with the raw amino-acid sequence, 345 residues long: Phosphoribosylformylglycinamidine cyclo-ligase (345 aa).

Belongs to the AIR synthase family.

Its subcellular location is the cytoplasm. The catalysed reaction is 2-formamido-N(1)-(5-O-phospho-beta-D-ribosyl)acetamidine + ATP = 5-amino-1-(5-phospho-beta-D-ribosyl)imidazole + ADP + phosphate + H(+). It functions in the pathway purine metabolism; IMP biosynthesis via de novo pathway; 5-amino-1-(5-phospho-D-ribosyl)imidazole from N(2)-formyl-N(1)-(5-phospho-D-ribosyl)glycinamide: step 2/2. The chain is Phosphoribosylformylglycinamidine cyclo-ligase from Enterobacter sp. (strain 638).